The following is a 278-amino-acid chain: Hydroxyethylthiazole kinase (278 aa).

Residue Met-51 coordinates substrate. ATP is bound by residues Arg-127 and Ser-173. Gly-201 is a substrate binding site.

It belongs to the Thz kinase family. Requires Mg(2+) as cofactor.

It carries out the reaction 5-(2-hydroxyethyl)-4-methylthiazole + ATP = 4-methyl-5-(2-phosphooxyethyl)-thiazole + ADP + H(+). Its pathway is cofactor biosynthesis; thiamine diphosphate biosynthesis; 4-methyl-5-(2-phosphoethyl)-thiazole from 5-(2-hydroxyethyl)-4-methylthiazole: step 1/1. Functionally, catalyzes the phosphorylation of the hydroxyl group of 4-methyl-5-beta-hydroxyethylthiazole (THZ). The sequence is that of Hydroxyethylthiazole kinase from Leptothrix cholodnii (strain ATCC 51168 / LMG 8142 / SP-6) (Leptothrix discophora (strain SP-6)).